Reading from the N-terminus, the 218-residue chain is MDKSESTSAGRNRRRRPRRGSRSAPSSADANFRVLSQQLSRLNKTLAAGRPTINHPTFVGSERCKPGYTFTSITLKPPKIDRGSYYGKRLLLPDSVTEFDKKLVSRIQIRVNPLPKFDSTVWVTVRKVSASSDLSVAAISAMFADGASPVLVYQYAASGVQANNKLLYDLSAMRADIGDMRKYAVLVYSKDDALETDELVLHVDIEHQRIPTSGVLPV.

N-acetylmethionine; by host is present on Met-1. Residues 1-28 form a disordered region; sequence MDKSESTSAGRNRRRRPRRGSRSAPSSA. A compositionally biased stretch (basic residues) spans 11–21; the sequence is RNRRRRPRRGS.

Belongs to the cucumovirus capsid protein family.

It localises to the virion. Functionally, capsid protein. Probably binds RNA and plays a role in packaging. The protein is Capsid protein of Cucumis sativus (Cucumber).